The following is a 765-amino-acid chain: DNA ligase (765 aa).

The segment at 1–34 (MAGDDEDRAVPAAEGAPPPSALPPVSGLDVKAAE) is disordered. NAD(+)-binding positions include 61–65 (DAEYD), 110–111 (SL), and Glu144. Lys146 (N6-AMP-lysine intermediate) is an active-site residue. Residues Arg167, Glu204, Lys317, and Lys341 each contribute to the NAD(+) site. Zn(2+) contacts are provided by Cys446, Cys449, Cys464, and Cys470. In terms of domain architecture, BRCT spans 687-765 (ATDSAIAGKT…EDEWLAIAQG (79 aa)).

The protein belongs to the NAD-dependent DNA ligase family. LigA subfamily. It depends on Mg(2+) as a cofactor. Mn(2+) serves as cofactor.

It catalyses the reaction NAD(+) + (deoxyribonucleotide)n-3'-hydroxyl + 5'-phospho-(deoxyribonucleotide)m = (deoxyribonucleotide)n+m + AMP + beta-nicotinamide D-nucleotide.. Its function is as follows. DNA ligase that catalyzes the formation of phosphodiester linkages between 5'-phosphoryl and 3'-hydroxyl groups in double-stranded DNA using NAD as a coenzyme and as the energy source for the reaction. It is essential for DNA replication and repair of damaged DNA. The protein is DNA ligase of Paracoccus denitrificans (strain Pd 1222).